Here is a 303-residue protein sequence, read N- to C-terminus: Succinate--CoA ligase [ADP-forming] subunit alpha (303 aa).

CoA contacts are provided by residues threonine 20–glutamate 23, lysine 46, and isoleucine 108–glutamate 110. Tyrosine 173 is a substrate binding site. Catalysis depends on histidine 259, which acts as the Tele-phosphohistidine intermediate.

This sequence belongs to the succinate/malate CoA ligase alpha subunit family. In terms of assembly, heterotetramer of two alpha and two beta subunits.

It carries out the reaction succinate + ATP + CoA = succinyl-CoA + ADP + phosphate. The enzyme catalyses GTP + succinate + CoA = succinyl-CoA + GDP + phosphate. It participates in carbohydrate metabolism; tricarboxylic acid cycle; succinate from succinyl-CoA (ligase route): step 1/1. Succinyl-CoA synthetase functions in the citric acid cycle (TCA), coupling the hydrolysis of succinyl-CoA to the synthesis of either ATP or GTP and thus represents the only step of substrate-level phosphorylation in the TCA. The alpha subunit of the enzyme binds the substrates coenzyme A and phosphate, while succinate binding and nucleotide specificity is provided by the beta subunit. The protein is Succinate--CoA ligase [ADP-forming] subunit alpha of Mycobacterium tuberculosis (strain CDC 1551 / Oshkosh).